The sequence spans 430 residues: Tol-Pal system protein TolB (430 aa).

Residues 1-21 (MKQALRVAFGFLILWASVLHA) form the signal peptide.

This sequence belongs to the TolB family. As to quaternary structure, the Tol-Pal system is composed of five core proteins: the inner membrane proteins TolA, TolQ and TolR, the periplasmic protein TolB and the outer membrane protein Pal. They form a network linking the inner and outer membranes and the peptidoglycan layer.

The protein resides in the periplasm. In terms of biological role, part of the Tol-Pal system, which plays a role in outer membrane invagination during cell division and is important for maintaining outer membrane integrity. TolB occupies a key intermediary position in the Tol-Pal system because it communicates directly with both membrane-embedded components, Pal in the outer membrane and TolA in the inner membrane. This is Tol-Pal system protein TolB from Escherichia coli O139:H28 (strain E24377A / ETEC).